The sequence spans 172 residues: MKACERLLLKIESQEKFVEEFKRILLELGLTLKEFSEISGIPYSTLYKVIQGKDFRVSTLIKILKTIRSFEKDENIDTIAIIAARPALNKITTRKIGINGKSYLIKEYPANSLEECIVAAVRAEREGVKGIVCAPIVSATIEKIVNVPVAVIIPEKDAFMKALEIIAKKINE.

Positions 21-75 (FKRILLELGLTLKEFSEISGIPYSTLYKVIQGKDFRVSTLIKILKTIRSFEKDEN) constitute an HTH cro/C1-type domain. Residues 32 to 51 (LKEFSEISGIPYSTLYKVIQ) constitute a DNA-binding region (H-T-H motif).

This is an uncharacterized protein from Methanocaldococcus jannaschii (strain ATCC 43067 / DSM 2661 / JAL-1 / JCM 10045 / NBRC 100440) (Methanococcus jannaschii).